The sequence spans 176 residues: Ribosome rescue factor SmrB (176 aa).

Residues 98 to 173 form the Smr domain; it reads LDLHGLTQKQ…GTAALLLLIE (76 aa).

The protein belongs to the SmrB family. As to quaternary structure, associates with collided ribosomes, but not with correctly translating polysomes.

In terms of biological role, acts as a ribosome collision sensor. Detects stalled/collided disomes (pairs of ribosomes where the leading ribosome is stalled and a second ribosome has collided with it) and endonucleolytically cleaves mRNA at the 5' boundary of the stalled ribosome. Stalled/collided disomes form a new interface (primarily via the 30S subunits) that binds SmrB. Cleaved mRNA becomes available for tmRNA ligation, leading to ribosomal subunit dissociation and rescue of stalled ribosomes. This is Ribosome rescue factor SmrB from Yersinia pseudotuberculosis serotype O:1b (strain IP 31758).